The primary structure comprises 138 residues: Translation initiation factor 5A (138 aa).

Lys-37 carries the hypusine modification.

Belongs to the eIF-5A family.

The protein resides in the cytoplasm. Its function is as follows. Functions by promoting the formation of the first peptide bond. This chain is Translation initiation factor 5A (eif5a), found in Pyrococcus horikoshii (strain ATCC 700860 / DSM 12428 / JCM 9974 / NBRC 100139 / OT-3).